The primary structure comprises 98 residues: MKKENYSFKQACAVVGGQSAMARLLGVSPPSVNQWIKGVRQLPAERCPAIERATRGEVLCEELRPDIDWSYLRRSACCSQNMSVKQLNDSNKSSFDHT.

When overexpressed, it induces Rac prophage excision, possibly to counteract the lethal toxicity of YdaT. Overexpression of ydaS or ydaST reduces growth and leads to loss of cell viability. May contribute to toxicity and morphological defects. The polypeptide is Putative transcriptional regulator YdaS (ydaS) (Escherichia coli (strain K12)).